An 829-amino-acid chain; its full sequence is Leucine--tRNA ligase (829 aa).

A 'HIGH' region motif is present at residues 42 to 52 (PYPSGRIHMGH). The 'KMSKS' region motif lies at 584 to 588 (KMSKS). An ATP-binding site is contributed by Lys-587.

It belongs to the class-I aminoacyl-tRNA synthetase family.

Its subcellular location is the cytoplasm. The catalysed reaction is tRNA(Leu) + L-leucine + ATP = L-leucyl-tRNA(Leu) + AMP + diphosphate. This chain is Leucine--tRNA ligase, found in Syntrophobacter fumaroxidans (strain DSM 10017 / MPOB).